The primary structure comprises 457 residues: Omega-hydroxypalmitate O-feruloyl transferase (457 aa).

Catalysis depends on proton acceptor residues His-184 and Asp-404.

It belongs to the plant acyltransferase family. Expressed in roots, seedlings, leaves, stems, flowers and siliques. Detected at the protein level in roots and in seed coats.

The catalysed reaction is 16-hydroxyhexadecanoate + (E)-feruloyl-CoA = 16-feruloyloxyhexadecanoate + CoA. Its function is as follows. Involved in the synthesis of aromatics of the suberin polymer. Specifically affects the accumulation of the ferulate constituent of suberin in roots and seeds, but has no effect on the content of p-coumarate or sinapate. The polypeptide is Omega-hydroxypalmitate O-feruloyl transferase (HHT1) (Arabidopsis thaliana (Mouse-ear cress)).